Here is a 259-residue protein sequence, read N- to C-terminus: Adenosylcobinamide-GDP ribazoletransferase (259 aa).

6 consecutive transmembrane segments (helical) span residues 9–29, 43–63, 64–84, 118–138, 143–163, and 196–216; these read NLFF…WIEV, LVGL…LYWV, SPSV…GGFH, ALAL…LALF, VSLA…SFIF, and VLAL…GLVI.

The protein belongs to the CobS family. It depends on Mg(2+) as a cofactor.

It is found in the cell inner membrane. It catalyses the reaction alpha-ribazole + adenosylcob(III)inamide-GDP = adenosylcob(III)alamin + GMP + H(+). The enzyme catalyses alpha-ribazole 5'-phosphate + adenosylcob(III)inamide-GDP = adenosylcob(III)alamin 5'-phosphate + GMP + H(+). It participates in cofactor biosynthesis; adenosylcobalamin biosynthesis; adenosylcobalamin from cob(II)yrinate a,c-diamide: step 7/7. Functionally, joins adenosylcobinamide-GDP and alpha-ribazole to generate adenosylcobalamin (Ado-cobalamin). Also synthesizes adenosylcobalamin 5'-phosphate from adenosylcobinamide-GDP and alpha-ribazole 5'-phosphate. In Shewanella halifaxensis (strain HAW-EB4), this protein is Adenosylcobinamide-GDP ribazoletransferase.